The primary structure comprises 277 residues: tRNA pseudouridine synthase A (277 aa).

Catalysis depends on Asp-51, which acts as the Nucleophile. Tyr-109 contributes to the substrate binding site.

Belongs to the tRNA pseudouridine synthase TruA family. Homodimer.

It carries out the reaction uridine(38/39/40) in tRNA = pseudouridine(38/39/40) in tRNA. Functionally, formation of pseudouridine at positions 38, 39 and 40 in the anticodon stem and loop of transfer RNAs. This is tRNA pseudouridine synthase A from Nitrosomonas eutropha (strain DSM 101675 / C91 / Nm57).